The chain runs to 102 residues: Feather keratin (102 aa).

The residue at position 1 (serine 1) is an N-acetylserine.

It belongs to the avian keratin family. As to quaternary structure, the avian keratins (F-ker, S-ker, C-ker and B-ker) are a complex mixture of very similar polypeptides.

The sequence is that of Feather keratin from Dromaius novaehollandiae (Emu).